The primary structure comprises 1357 residues: DNA-directed RNA polymerase subunit beta (1357 aa).

This sequence belongs to the RNA polymerase beta chain family. The RNAP catalytic core consists of 2 alpha, 1 beta, 1 beta' and 1 omega subunit. When a sigma factor is associated with the core the holoenzyme is formed, which can initiate transcription.

The enzyme catalyses RNA(n) + a ribonucleoside 5'-triphosphate = RNA(n+1) + diphosphate. Its function is as follows. DNA-dependent RNA polymerase catalyzes the transcription of DNA into RNA using the four ribonucleoside triphosphates as substrates. The sequence is that of DNA-directed RNA polymerase subunit beta from Pseudomonas savastanoi pv. phaseolicola (strain 1448A / Race 6) (Pseudomonas syringae pv. phaseolicola (strain 1448A / Race 6)).